A 226-amino-acid chain; its full sequence is PKHD-type hydroxylase TERTU_2553 (226 aa).

Residues 78–177 (KIYPPKFNCY…RVASFIWIQS (100 aa)) enclose the Fe2OG dioxygenase domain. Fe cation contacts are provided by H96, D98, and H158. R168 serves as a coordination point for 2-oxoglutarate.

The cofactor is Fe(2+). L-ascorbate is required as a cofactor.

The protein is PKHD-type hydroxylase TERTU_2553 of Teredinibacter turnerae (strain ATCC 39867 / T7901).